Consider the following 214-residue polypeptide: Pyrrolidone-carboxylate peptidase (214 aa).

Residues E80, C143, and H166 contribute to the active site.

This sequence belongs to the peptidase C15 family. Homotetramer.

The protein resides in the cytoplasm. The catalysed reaction is Release of an N-terminal pyroglutamyl group from a polypeptide, the second amino acid generally not being Pro.. In terms of biological role, removes 5-oxoproline from various penultimate amino acid residues except L-proline. In Enterobacter sp. (strain 638), this protein is Pyrrolidone-carboxylate peptidase.